The following is a 501-amino-acid chain: Cytochrome P450 71B23 (501 aa).

The helical transmembrane segment at M1–T21 threads the bilayer. C443 serves as a coordination point for heme.

Belongs to the cytochrome P450 family. The cofactor is heme.

It localises to the membrane. In Arabidopsis thaliana (Mouse-ear cress), this protein is Cytochrome P450 71B23 (CYP71B23).